The following is a 111-amino-acid chain: Elevenin (111 aa).

An N-terminal signal peptide occupies residues 1–24 (MAPSQKALLVLVLSMLLTASDSRA). Cys29 and Cys38 are disulfide-bonded. Residues 44–111 (KRGGDSLSVG…TEQLDRLLTL (68 aa)) constitute a propeptide that is removed on maturation.

It belongs to the elevenin family. Monomer. Expressed by the venom duct.

It localises to the secreted. In terms of biological role, may mimic the function of prey elevenin neuropeptide. In vivo, intracranial injection in mice induces hyperactivity. The protein is Elevenin of Conus ebraeus (Hebrew cone).